The chain runs to 394 residues: Large ribosomal subunit protein bL27m (394 aa).

Residues methionine 1–threonine 34 constitute a mitochondrion transit peptide. Disordered stretches follow at residues threonine 36–lysine 57 and alanine 145–serine 181. Over residues alanine 145 to glutamine 170 the composition is skewed to basic and acidic residues.

This sequence belongs to the bacterial ribosomal protein bL27 family.

The protein localises to the mitochondrion. Its function is as follows. Component of the large subunit of mitochondrial ribosome. This Debaryomyces hansenii (strain ATCC 36239 / CBS 767 / BCRC 21394 / JCM 1990 / NBRC 0083 / IGC 2968) (Yeast) protein is Large ribosomal subunit protein bL27m (MRPL2).